The chain runs to 516 residues: Protein phosphatase 1H (516 aa).

Disordered regions lie at residues 102 to 122 (ADPS…PSGD) and 181 to 202 (PPTC…SGSQ). A PPM-type phosphatase domain is found at 106–506 (SVSYTPSRRR…DDISVFIIPL (401 aa)). Residues 190 to 202 (PNPQLHASASGSQ) show a composition bias toward polar residues.

Belongs to the PP2C family.

It localises to the nucleus. Its subcellular location is the cytoplasm. The catalysed reaction is O-phospho-L-seryl-[protein] + H2O = L-seryl-[protein] + phosphate. It catalyses the reaction O-phospho-L-threonyl-[protein] + H2O = L-threonyl-[protein] + phosphate. This Danio rerio (Zebrafish) protein is Protein phosphatase 1H (ppm1h).